The chain runs to 129 residues: MELVNIFLETDAGRVKFAIKNTDDVCASELINKFVELLSEYIHIDQSEFYLVVKDKDIFYFKCDRGSISIVNNEFYVFDEPLLFVKDFTNVTGVEFIVTETMPCRIIPKNNHAVISVVTNHKFYNGLSL.

The protein belongs to the orthopoxvirus OPG073 family.

The protein resides in the virion. The protein is Core protein OPG073 (OPG073) of Homo sapiens (Human).